Here is a 114-residue protein sequence, read N- to C-terminus: Transcription factor S1 (114 aa).

The N-ZR stretch occupies residues Met-1 to Val-43. Residues Cys-7, Cys-10, Cys-27, Cys-30, Cys-75, and Cys-78 each contribute to the Zn(2+) site. A C-ZR region spans residues Met-63–Glu-114. A TFIIS-type zinc finger spans residues Lys-71 to Arg-111. Catalysis depends on residues Asp-94 and Glu-95. Residues Cys-103 and Cys-106 each contribute to the Zn(2+) site.

This sequence belongs to the archaeal RpoM/eukaryotic RPA12/RPB9/RPC11 RNA polymerase family. Interacts with RNA polymerase; probably competes with TFS4 for the same binding site. The cofactor is Zn(2+).

Functionally, induces RNA cleavage activity in the RNA polymerase. Induces rapid cleavage of a stalled transcription elongation complex with a 2-nucleotide reduction at the 3' end of the nascent RNA. Truncated RNA is able to resume elongation. During transcription elongation it enhances processivity. Involved in transcriptional proofreading and fidelity. Misincorporation of nucleotides during elongation of transcription leads to arrested elongation complexes which are rescued by TFS-promoted removal of a dinucleotide from the 3'-end. TFS1 is able to induce a cleavage resynthesis cycle in stalled elongation complexes (resulting from the next missing nucleotide or a reduced incorporation rate of a wrong nucleotide) preventing misincorporation and enabling proofreading in a post-incorporation manner. Pausing of elongation complexes is the main determinant of TFS-induced RNA cleavage. This chain is Transcription factor S1, found in Saccharolobus solfataricus (strain ATCC 35092 / DSM 1617 / JCM 11322 / P2) (Sulfolobus solfataricus).